The primary structure comprises 391 residues: MNYKTVDVILERALLGDDISPQEGIVLLTQTDSGAIASIRHTADKLRQQQAGDTVTYVINRNINFTNICEQHCSFCAFRRNDGDADAYWLDWAGILEKSHDAVQRGATEICMQGGLHPQAQIDGKSLPYYLKLLETIKQEYPQIHLHAFSPQEVQFIARMDGLEYAGVISALQNAGVNSLPGTAAEVLDDQVRRVLCPEKINTATWLEIISTAHKLGLHTTSTILSGHIETPEQQIGHLEKLRSLQQIATNQKYPARITEFIVLPFVGQEAPKSLRRRVGRDQPVLADALLLGAVARIYLGNWIANHQPSWVKLGLAGATEALNWGCNDIGGTLMEEHITTMAGAVGGTCMEVETLQNAIASIGRPYQQRDTLYQPVESAKQLANTVIGNG.

The 248-residue stretch at 55–302 (VTYVINRNIN…GAVARIYLGN (248 aa)) folds into the Radical SAM core domain. [4Fe-4S] cluster contacts are provided by Cys-69, Cys-73, and Cys-76.

The protein belongs to the radical SAM superfamily. CofH family. In terms of assembly, consists of two subunits, CofG and CofH. It depends on [4Fe-4S] cluster as a cofactor.

The enzyme catalyses 5-amino-6-(D-ribitylamino)uracil + L-tyrosine + S-adenosyl-L-methionine = 5-amino-5-(4-hydroxybenzyl)-6-(D-ribitylimino)-5,6-dihydrouracil + 2-iminoacetate + 5'-deoxyadenosine + L-methionine + H(+). It functions in the pathway cofactor biosynthesis; coenzyme F0 biosynthesis. In terms of biological role, catalyzes the radical-mediated synthesis of 5-amino-5-(4-hydroxybenzyl)-6-(D-ribitylimino)-5,6-dihydrouracil from 5-amino-6-(D-ribitylamino)uracil and L-tyrosine. The chain is 5-amino-6-(D-ribitylamino)uracil--L-tyrosine 4-hydroxyphenyl transferase from Trichormus variabilis (strain ATCC 29413 / PCC 7937) (Anabaena variabilis).